The chain runs to 208 residues: Probable GTP-binding protein EngB (208 aa).

The 183-residue stretch at Leu-23 to Thr-205 folds into the EngB-type G domain. GTP is bound by residues Gly-31–Ser-38, Gly-57–Leu-61, Asp-84–Gly-87, Thr-154–Asp-157, and Phe-182–Ala-184. Mg(2+)-binding residues include Ser-38 and Thr-59.

Belongs to the TRAFAC class TrmE-Era-EngA-EngB-Septin-like GTPase superfamily. EngB GTPase family. Mg(2+) is required as a cofactor.

Its function is as follows. Necessary for normal cell division and for the maintenance of normal septation. The chain is Probable GTP-binding protein EngB from Helicobacter pylori (strain Shi470).